Here is a 310-residue protein sequence, read N- to C-terminus: Cysteine synthase (310 aa).

An N6-(pyridoxal phosphate)lysine modification is found at Lys46. Pyridoxal 5'-phosphate contacts are provided by residues Asn76, 180 to 184, and Ser268; that span reads GTGGT.

Belongs to the cysteine synthase/cystathionine beta-synthase family. As to quaternary structure, homodimer. Requires pyridoxal 5'-phosphate as cofactor.

The catalysed reaction is O-acetyl-L-serine + hydrogen sulfide = L-cysteine + acetate. It participates in amino-acid biosynthesis; L-cysteine biosynthesis; L-cysteine from L-serine: step 2/2. The sequence is that of Cysteine synthase (cysK) from Staphylococcus aureus (strain Mu50 / ATCC 700699).